A 453-amino-acid polypeptide reads, in one-letter code: Tyrosine-protein phosphatase non-receptor type 18 (453 aa).

Residues Leu26–Leu291 enclose the Tyrosine-protein phosphatase domain. Substrate-binding positions include Asp197, Cys229–Arg235, and Gln276. Cys229 functions as the Phosphocysteine intermediate in the catalytic mechanism. 2 positions are modified to phosphotyrosine: Tyr381 and Tyr419. Residues Val384 to Val453 form a disordered region. Over residues Gly442–Val453 the composition is skewed to basic and acidic residues.

The protein belongs to the protein-tyrosine phosphatase family. Non-receptor class 4 subfamily. As to quaternary structure, interacts with PSTPIP1. In terms of tissue distribution, highest expression in bone marrow. Also expressed in kidney, lung, ovary, spleen, thymus and lymph node.

The protein localises to the nucleus. The protein resides in the cytoplasm. It catalyses the reaction O-phospho-L-tyrosyl-[protein] + H2O = L-tyrosyl-[protein] + phosphate. May be involved in growth and differentiation of hematopoietic cells. This Mus musculus (Mouse) protein is Tyrosine-protein phosphatase non-receptor type 18 (Ptpn18).